We begin with the raw amino-acid sequence, 81 residues long: Large ribosomal subunit protein bL31B (81 aa).

This sequence belongs to the bacterial ribosomal protein bL31 family. Type B subfamily. Part of the 50S ribosomal subunit.

The chain is Large ribosomal subunit protein bL31B from Bacillus cereus (strain ATCC 10987 / NRS 248).